Reading from the N-terminus, the 99-residue chain is Large ribosomal subunit protein uL23 (99 aa).

Belongs to the universal ribosomal protein uL23 family. Part of the 50S ribosomal subunit. Contacts protein L29, and trigger factor when it is bound to the ribosome.

Functionally, one of the early assembly proteins it binds 23S rRNA. One of the proteins that surrounds the polypeptide exit tunnel on the outside of the ribosome. Forms the main docking site for trigger factor binding to the ribosome. This is Large ribosomal subunit protein uL23 from Streptococcus suis (strain 98HAH33).